Reading from the N-terminus, the 115-residue chain is Large ribosomal subunit protein bL31B (115 aa).

The protein belongs to the bacterial ribosomal protein bL31 family. Type B subfamily. As to quaternary structure, part of the 50S ribosomal subunit.

This is Large ribosomal subunit protein bL31B from Polynucleobacter asymbioticus (strain DSM 18221 / CIP 109841 / QLW-P1DMWA-1) (Polynucleobacter necessarius subsp. asymbioticus).